Reading from the N-terminus, the 371-residue chain is N-acetyldiaminopimelate deacetylase (371 aa).

The active site involves Asp68. Residue Glu127 is the Proton acceptor of the active site.

It belongs to the peptidase M20A family. N-acetyldiaminopimelate deacetylase subfamily.

It catalyses the reaction N-acetyl-(2S,6S)-2,6-diaminopimelate + H2O = (2S,6S)-2,6-diaminopimelate + acetate. It functions in the pathway amino-acid biosynthesis; L-lysine biosynthesis via DAP pathway; LL-2,6-diaminopimelate from (S)-tetrahydrodipicolinate (acetylase route): step 3/3. Catalyzes the conversion of N-acetyl-diaminopimelate to diaminopimelate and acetate. This is N-acetyldiaminopimelate deacetylase from Listeria innocua serovar 6a (strain ATCC BAA-680 / CLIP 11262).